The primary structure comprises 459 residues: Putrescine aminotransferase (459 aa).

Residues 150–151 (GT) and Gln-274 contribute to the pyridoxal 5'-phosphate site. Position 300 is an N6-(pyridoxal phosphate)lysine (Lys-300). Thr-332 contacts pyridoxal 5'-phosphate.

Belongs to the class-III pyridoxal-phosphate-dependent aminotransferase family. Putrescine aminotransferase subfamily. Pyridoxal 5'-phosphate serves as cofactor.

The catalysed reaction is an alkane-alpha,omega-diamine + 2-oxoglutarate = an omega-aminoaldehyde + L-glutamate. It catalyses the reaction putrescine + 2-oxoglutarate = 1-pyrroline + L-glutamate + H2O. It carries out the reaction cadaverine + 2-oxoglutarate = 5-aminopentanal + L-glutamate. Its pathway is amine and polyamine degradation; putrescine degradation; 4-aminobutanal from putrescine (transaminase route): step 1/1. In terms of biological role, catalyzes the aminotransferase reaction from putrescine to 2-oxoglutarate, leading to glutamate and 4-aminobutanal, which spontaneously cyclizes to form 1-pyrroline. This is the first step in one of two pathways for putrescine degradation, where putrescine is converted into 4-aminobutanoate (gamma-aminobutyrate or GABA) via 4-aminobutanal. Also functions as a cadaverine transaminase in a a L-lysine degradation pathway to succinate that proceeds via cadaverine, glutarate and L-2-hydroxyglutarate. In Escherichia coli O7:K1 (strain IAI39 / ExPEC), this protein is Putrescine aminotransferase.